Reading from the N-terminus, the 328-residue chain is tRNA uridine(34) hydroxylase (328 aa).

The region spanning 130–224 (LDEDTVVLDT…YGKDPEVQGE (95 aa)) is the Rhodanese domain. Catalysis depends on Cys-184, which acts as the Cysteine persulfide intermediate.

Belongs to the TrhO family.

It carries out the reaction uridine(34) in tRNA + AH2 + O2 = 5-hydroxyuridine(34) in tRNA + A + H2O. Its function is as follows. Catalyzes oxygen-dependent 5-hydroxyuridine (ho5U) modification at position 34 in tRNAs. This chain is tRNA uridine(34) hydroxylase, found in Streptococcus pyogenes serotype M49 (strain NZ131).